The chain runs to 500 residues: Cytochrome P450 2D28 (500 aa).

Cys446 is a binding site for heme.

This sequence belongs to the cytochrome P450 family. Requires heme as cofactor.

Its subcellular location is the endoplasmic reticulum membrane. It localises to the microsome membrane. The sequence is that of Cytochrome P450 2D28 (CYP2D28A) from Mesocricetus auratus (Golden hamster).